Reading from the N-terminus, the 152-residue chain is Nucleoside diphosphate kinase (152 aa).

ATP contacts are provided by lysine 11, phenylalanine 59, arginine 87, threonine 93, arginine 104, and asparagine 114. Histidine 117 (pros-phosphohistidine intermediate) is an active-site residue.

Belongs to the NDK family. Homotetramer. It depends on Mg(2+) as a cofactor.

It localises to the cytoplasm. The catalysed reaction is dZDP + ATP = dZTP + ADP. It catalyses the reaction a 2'-deoxyribonucleoside 5'-diphosphate + ATP = a 2'-deoxyribonucleoside 5'-triphosphate + ADP. The enzyme catalyses a ribonucleoside 5'-diphosphate + ATP = a ribonucleoside 5'-triphosphate + ADP. It participates in purine metabolism. Major role in the synthesis of nucleoside triphosphates other than ATP. The ATP gamma phosphate is transferred to the NDP beta phosphate via a ping-pong mechanism, using a phosphorylated active-site intermediate. Functionally, (Microbial infection) Catalyzes the phosphorylation of dZDP to dZTP, when the bacterium is infected by a phage that produces the substrate for the synthesis of dZTP (2- amino-2'-deoxyadenosine 5'-triphosphate), which is then used by the phage as a DNA polymerase substrate. This is Nucleoside diphosphate kinase from Synechococcus sp. (strain CC9311).